A 432-amino-acid chain; its full sequence is D-amino acid dehydrogenase (432 aa).

3-17 contributes to the FAD binding site; that stretch reads VLVLGSGVVGTASAY.

Belongs to the DadA oxidoreductase family. The cofactor is FAD.

It catalyses the reaction a D-alpha-amino acid + A + H2O = a 2-oxocarboxylate + AH2 + NH4(+). Its pathway is amino-acid degradation; D-alanine degradation; NH(3) and pyruvate from D-alanine: step 1/1. In terms of biological role, oxidative deamination of D-amino acids. The sequence is that of D-amino acid dehydrogenase from Stutzerimonas stutzeri (strain A1501) (Pseudomonas stutzeri).